The chain runs to 124 residues: MATINQLVRKPRVRQVTKSNVPALQACPQRRGVCTRVYTTTPKKPNSALRKVARVRLTNGFEVTSYIGGEGHNLQEHSVILIRGGRVKDLPGVRYHTVRGALDCSGVSDRRQGRSKYGAKRPKS.

Residue aspartate 89 is modified to 3-methylthioaspartic acid. Residues 105–124 (SGVSDRRQGRSKYGAKRPKS) form a disordered region. A compositionally biased stretch (basic residues) spans 113-124 (GRSKYGAKRPKS).

The protein belongs to the universal ribosomal protein uS12 family. As to quaternary structure, part of the 30S ribosomal subunit. Contacts proteins S8 and S17. May interact with IF1 in the 30S initiation complex.

Functionally, with S4 and S5 plays an important role in translational accuracy. Interacts with and stabilizes bases of the 16S rRNA that are involved in tRNA selection in the A site and with the mRNA backbone. Located at the interface of the 30S and 50S subunits, it traverses the body of the 30S subunit contacting proteins on the other side and probably holding the rRNA structure together. The combined cluster of proteins S8, S12 and S17 appears to hold together the shoulder and platform of the 30S subunit. The chain is Small ribosomal subunit protein uS12 from Colwellia psychrerythraea (strain 34H / ATCC BAA-681) (Vibrio psychroerythus).